We begin with the raw amino-acid sequence, 617 residues long: Probable LRR receptor-like serine/threonine-protein kinase RKF3 (617 aa).

The N-terminal stretch at 1–20 is a signal peptide; sequence MLFLRRIAVVFFVFTSFSAA. Over 21–212 the chain is Extracellular; the sequence is QNSTCPLDFS…PTSSGANKVK (192 aa). N-linked (GlcNAc...) asparagine glycosylation is found at Asn-22, Asn-124, Asn-135, and Asn-165. Residues 213–233 form a helical membrane-spanning segment; sequence VLVSSFSVLLVASVLVITAWF. Topologically, residues 234–617 are cytoplasmic; the sequence is WYCRRKKSKL…DGPSGNTNTT (384 aa). The Protein kinase domain maps to 283–563; sequence FSRHNIIGRG…VKMLESNEFT (281 aa). ATP is bound by residues 289–297 and Lys-311; that span reads IGRGGYGNV. Catalysis depends on Asp-412, which acts as the Proton acceptor. The disordered stretch occupies residues 585–617; the sequence is VSSSSGSGKLTSPTGYQAFSFGGDGPSGNTNTT.

This sequence belongs to the protein kinase superfamily. Ser/Thr protein kinase family. As to expression, expressed in the whole plant at low levels.

It is found in the cell membrane. The enzyme catalyses L-seryl-[protein] + ATP = O-phospho-L-seryl-[protein] + ADP + H(+). It carries out the reaction L-threonyl-[protein] + ATP = O-phospho-L-threonyl-[protein] + ADP + H(+). The sequence is that of Probable LRR receptor-like serine/threonine-protein kinase RKF3 (RKF3) from Arabidopsis thaliana (Mouse-ear cress).